Consider the following 180-residue polypeptide: Nucleoside triphosphate/diphosphate phosphatase (180 aa).

The Proton donor role is filled by Arg26. 6 residues coordinate Mg(2+): Asn90, Asp106, Asp108, Asp110, Asp123, and Glu126.

The protein belongs to the Ntdp family. The cofactor is Mg(2+).

The catalysed reaction is a ribonucleoside 5'-triphosphate + H2O = a ribonucleoside 5'-diphosphate + phosphate + H(+). It carries out the reaction a ribonucleoside 5'-diphosphate + H2O = a ribonucleoside 5'-phosphate + phosphate + H(+). Functionally, has nucleoside phosphatase activity towards nucleoside triphosphates and nucleoside diphosphates. In Staphylococcus epidermidis (strain ATCC 35984 / DSM 28319 / BCRC 17069 / CCUG 31568 / BM 3577 / RP62A), this protein is Nucleoside triphosphate/diphosphate phosphatase.